Reading from the N-terminus, the 246-residue chain is MITLTDCSRRFQDKKKVVKAVRDVSLTIEKGEVVGILGENGAGKTTMLRMIASLLEPSQGVITVDGFDTVKQPAEVKQRIGVLFGGETGLYDRMTAKENLQYFGRLYGLNRHEIKARIEDLSKRFGMRDYMNRRVGGFSKGMRQKVAIARALIHDPDIILFDEPTTGLDITSSNIFREFIQQLKREQKTILFSSHIMEEVQALCDSVIMIHSGEVIYRGALESLYESERSEDLNYIFMSKLVRGIS.

In terms of domain architecture, ABC transporter spans 2–237 (ITLTDCSRRF…ERSEDLNYIF (236 aa)). 38–45 (GENGAGKT) provides a ligand contact to ATP.

Belongs to the ABC transporter superfamily. As to quaternary structure, the complex is composed of NatA and NatB.

The enzyme catalyses Na(+)(in) + ATP + H2O = Na(+)(out) + ADP + phosphate + H(+). Functionally, part of an ABC transporter that catalyzes ATP-dependent electrogenic sodium extrusion. The sequence is that of ABC transporter ATP-binding protein NatA from Bacillus subtilis (strain 168).